Consider the following 387-residue polypeptide: Probable peptidoglycan glycosyltransferase FtsW (387 aa).

The next 9 helical transmembrane spans lie at 19–39, 61–81, 86–106, 118–138, 161–181, 199–219, 286–306, 320–340, and 352–372; these read LDFSLYATVAILISVGIVMVA, ITFLAMGLVGGLVILAVPMSV, SGLLLILAFFLLMAVLIPGIG, LGPFSMQASEIAKFCLIVYFA, VLLIIVLLLLLEPDFGSSVVI, FLLLAVSGVAGLALMAVASPY, FIGAIALIGVFGFFLYRLVIL, YVVFGIGVMLAMQAFINMGVA, and PFISYGGSSLLITCGLMALVF.

Belongs to the SEDS family. FtsW subfamily.

It localises to the cell inner membrane. It carries out the reaction [GlcNAc-(1-&gt;4)-Mur2Ac(oyl-L-Ala-gamma-D-Glu-L-Lys-D-Ala-D-Ala)](n)-di-trans,octa-cis-undecaprenyl diphosphate + beta-D-GlcNAc-(1-&gt;4)-Mur2Ac(oyl-L-Ala-gamma-D-Glu-L-Lys-D-Ala-D-Ala)-di-trans,octa-cis-undecaprenyl diphosphate = [GlcNAc-(1-&gt;4)-Mur2Ac(oyl-L-Ala-gamma-D-Glu-L-Lys-D-Ala-D-Ala)](n+1)-di-trans,octa-cis-undecaprenyl diphosphate + di-trans,octa-cis-undecaprenyl diphosphate + H(+). The protein operates within cell wall biogenesis; peptidoglycan biosynthesis. Peptidoglycan polymerase that is essential for cell division. This Saccharophagus degradans (strain 2-40 / ATCC 43961 / DSM 17024) protein is Probable peptidoglycan glycosyltransferase FtsW.